We begin with the raw amino-acid sequence, 420 residues long: Multifunctional CCA protein (420 aa).

2 residues coordinate ATP: Gly8 and Arg11. Positions 8 and 11 each coordinate CTP. Residues Asp21 and Asp23 each contribute to the Mg(2+) site. ATP contacts are provided by Arg91, Arg137, and Arg140. CTP is bound by residues Arg91, Arg137, and Arg140. The region spanning 228-334 (TFVHTMLVLQ…LKLFNRLDVW (107 aa)) is the HD domain.

It belongs to the tRNA nucleotidyltransferase/poly(A) polymerase family. Bacterial CCA-adding enzyme type 1 subfamily. As to quaternary structure, monomer. Can also form homodimers and oligomers. Mg(2+) is required as a cofactor. Requires Ni(2+) as cofactor.

The enzyme catalyses a tRNA precursor + 2 CTP + ATP = a tRNA with a 3' CCA end + 3 diphosphate. It carries out the reaction a tRNA with a 3' CCA end + 2 CTP + ATP = a tRNA with a 3' CCACCA end + 3 diphosphate. In terms of biological role, catalyzes the addition and repair of the essential 3'-terminal CCA sequence in tRNAs without using a nucleic acid template. Adds these three nucleotides in the order of C, C, and A to the tRNA nucleotide-73, using CTP and ATP as substrates and producing inorganic pyrophosphate. tRNA 3'-terminal CCA addition is required both for tRNA processing and repair. Also involved in tRNA surveillance by mediating tandem CCA addition to generate a CCACCA at the 3' terminus of unstable tRNAs. While stable tRNAs receive only 3'-terminal CCA, unstable tRNAs are marked with CCACCA and rapidly degraded. In Pasteurella multocida (strain Pm70), this protein is Multifunctional CCA protein.